We begin with the raw amino-acid sequence, 227 residues long: uncharacterized protein (227 aa).

An N-terminal signal peptide occupies residues 1 to 23 (MKKLTVTFLTFISIFFAATAAFA).

This is an uncharacterized protein from Coxiella burnetii (strain RSA 493 / Nine Mile phase I).